We begin with the raw amino-acid sequence, 343 residues long: L-threonine 3-dehydrogenase (343 aa).

Cys40 is a Zn(2+) binding site. Catalysis depends on charge relay system residues Thr42 and His45. Zn(2+) is bound by residues His65, Glu66, Cys95, Cys98, Cys101, and Cys109. NAD(+) contacts are provided by residues Ile177, Asp197, Arg202, 264-266 (LGI), and 288-289 (IY).

This sequence belongs to the zinc-containing alcohol dehydrogenase family. Homotetramer. The cofactor is Zn(2+).

The protein resides in the cytoplasm. It catalyses the reaction L-threonine + NAD(+) = (2S)-2-amino-3-oxobutanoate + NADH + H(+). It participates in amino-acid degradation; L-threonine degradation via oxydo-reductase pathway; glycine from L-threonine: step 1/2. In terms of biological role, catalyzes the NAD(+)-dependent oxidation of L-threonine to 2-amino-3-ketobutyrate. In Aliivibrio fischeri (strain ATCC 700601 / ES114) (Vibrio fischeri), this protein is L-threonine 3-dehydrogenase.